Here is a 283-residue protein sequence, read N- to C-terminus: Peroxisomal protein 2 (283 aa).

Positions 281–283 match the Peroxisomal target signal 1 (PTS1) motif; the sequence is VKL.

This sequence belongs to the PXP2 family.

Its subcellular location is the peroxisome matrix. It localises to the cytoplasm. The protein localises to the cytosol. Its function is as follows. Probably involved in peroxisome formation or maintenance as well as in amino acid metabolism. This Saccharomyces cerevisiae (strain ATCC 204508 / S288c) (Baker's yeast) protein is Peroxisomal protein 2.